The following is a 166-amino-acid chain: Small ribosomal subunit protein uS5 (166 aa).

The region spanning 11–74 (LQEKLIAVNR…EKARRNMITV (64 aa)) is the S5 DRBM domain.

The protein belongs to the universal ribosomal protein uS5 family. Part of the 30S ribosomal subunit. Contacts proteins S4 and S8.

In terms of biological role, with S4 and S12 plays an important role in translational accuracy. Located at the back of the 30S subunit body where it stabilizes the conformation of the head with respect to the body. The protein is Small ribosomal subunit protein uS5 of Histophilus somni (strain 2336) (Haemophilus somnus).